The chain runs to 198 residues: Recombination protein RecR (198 aa).

Residues 57–72 (CSICGNLTESDPCAIC) form a C4-type zinc finger. In terms of domain architecture, Toprim spans 80–175 (TTILVVEESK…KVTRLAHGLA (96 aa)).

This sequence belongs to the RecR family.

In terms of biological role, may play a role in DNA repair. It seems to be involved in an RecBC-independent recombinational process of DNA repair. It may act with RecF and RecO. The sequence is that of Recombination protein RecR from Lactococcus lactis subsp. cremoris (strain SK11).